The chain runs to 562 residues: NAD-dependent malic enzyme 1 (562 aa).

The active-site Proton donor is tyrosine 101. Arginine 154 is an NAD(+) binding site. Catalysis depends on lysine 172, which acts as the Proton acceptor. Residues glutamate 243, aspartate 244, and aspartate 267 each coordinate a divalent metal cation. Residues aspartate 267 and asparagine 415 each coordinate NAD(+).

It belongs to the malic enzymes family. As to quaternary structure, homotetramer. The cofactor is Mg(2+). It depends on Mn(2+) as a cofactor.

It catalyses the reaction (S)-malate + NAD(+) = pyruvate + CO2 + NADH. It carries out the reaction oxaloacetate + H(+) = pyruvate + CO2. This chain is NAD-dependent malic enzyme 1, found in Vibrio vulnificus (strain YJ016).